The chain runs to 288 residues: Elongation factor Ts (288 aa).

The involved in Mg(2+) ion dislocation from EF-Tu stretch occupies residues 82–85; it reads TDFV.

This sequence belongs to the EF-Ts family.

It localises to the cytoplasm. Functionally, associates with the EF-Tu.GDP complex and induces the exchange of GDP to GTP. It remains bound to the aminoacyl-tRNA.EF-Tu.GTP complex up to the GTP hydrolysis stage on the ribosome. This Prosthecochloris aestuarii (strain DSM 271 / SK 413) protein is Elongation factor Ts.